Reading from the N-terminus, the 469-residue chain is 3-isopropylmalate dehydratase large subunit (469 aa).

Positions 350, 410, and 413 each coordinate [4Fe-4S] cluster.

It belongs to the aconitase/IPM isomerase family. LeuC type 1 subfamily. In terms of assembly, heterodimer of LeuC and LeuD. It depends on [4Fe-4S] cluster as a cofactor.

It carries out the reaction (2R,3S)-3-isopropylmalate = (2S)-2-isopropylmalate. Its pathway is amino-acid biosynthesis; L-leucine biosynthesis; L-leucine from 3-methyl-2-oxobutanoate: step 2/4. Its function is as follows. Catalyzes the isomerization between 2-isopropylmalate and 3-isopropylmalate, via the formation of 2-isopropylmaleate. This chain is 3-isopropylmalate dehydratase large subunit, found in Allorhizobium ampelinum (strain ATCC BAA-846 / DSM 112012 / S4) (Agrobacterium vitis (strain S4)).